The sequence spans 314 residues: Ornithine carbamoyltransferase (314 aa).

Carbamoyl phosphate-binding positions include 58–61, Gln-85, Arg-109, and 136–139; these read STRT and HPAQ. Residues Asn-169, Asp-233, and 237–238 each bind L-ornithine; that span reads SM. Residues 273-274 and Arg-301 contribute to the carbamoyl phosphate site; that span reads CL.

The protein belongs to the aspartate/ornithine carbamoyltransferase superfamily. OTCase family.

Its subcellular location is the cytoplasm. It carries out the reaction carbamoyl phosphate + L-ornithine = L-citrulline + phosphate + H(+). It functions in the pathway amino-acid degradation; L-arginine degradation via ADI pathway; carbamoyl phosphate from L-arginine: step 2/2. Functionally, reversibly catalyzes the transfer of the carbamoyl group from carbamoyl phosphate (CP) to the N(epsilon) atom of ornithine (ORN) to produce L-citrulline. The sequence is that of Ornithine carbamoyltransferase from Staphylothermus marinus (strain ATCC 43588 / DSM 3639 / JCM 9404 / F1).